A 331-amino-acid polypeptide reads, in one-letter code: Ketol-acid reductoisomerase (NADP(+)) (331 aa).

Positions 2 to 181 (LEKYYDKDAD…GATRAVVFET (180 aa)) constitute a KARI N-terminal Rossmann domain. NADP(+) contacts are provided by residues 25–28 (YGSQ), Arg48, Ser52, and 82–85 (DEQQ). The active site involves His107. Gly133 contacts NADP(+). One can recognise a KARI C-terminal knotted domain in the interval 182–327 (SFREETETDL…KEIRATMPQF (146 aa)). Mg(2+) is bound by residues Asp190, Glu194, Glu226, and Glu230. Ser251 contacts substrate.

This sequence belongs to the ketol-acid reductoisomerase family. Requires Mg(2+) as cofactor.

The enzyme catalyses (2R)-2,3-dihydroxy-3-methylbutanoate + NADP(+) = (2S)-2-acetolactate + NADPH + H(+). The catalysed reaction is (2R,3R)-2,3-dihydroxy-3-methylpentanoate + NADP(+) = (S)-2-ethyl-2-hydroxy-3-oxobutanoate + NADPH + H(+). The protein operates within amino-acid biosynthesis; L-isoleucine biosynthesis; L-isoleucine from 2-oxobutanoate: step 2/4. It participates in amino-acid biosynthesis; L-valine biosynthesis; L-valine from pyruvate: step 2/4. Functionally, involved in the biosynthesis of branched-chain amino acids (BCAA). Catalyzes an alkyl-migration followed by a ketol-acid reduction of (S)-2-acetolactate (S2AL) to yield (R)-2,3-dihydroxy-isovalerate. In the isomerase reaction, S2AL is rearranged via a Mg-dependent methyl migration to produce 3-hydroxy-3-methyl-2-ketobutyrate (HMKB). In the reductase reaction, this 2-ketoacid undergoes a metal-dependent reduction by NADPH to yield (R)-2,3-dihydroxy-isovalerate. This chain is Ketol-acid reductoisomerase (NADP(+)), found in Methanospirillum hungatei JF-1 (strain ATCC 27890 / DSM 864 / NBRC 100397 / JF-1).